Reading from the N-terminus, the 421-residue chain is UDP-N-acetylglucosamine 1-carboxyvinyltransferase (421 aa).

26-27 is a phosphoenolpyruvate binding site; the sequence is KN. UDP-N-acetyl-alpha-D-glucosamine is bound at residue Arg96. Catalysis depends on Asp120, which acts as the Proton donor. Residues Asp308 and Val330 each coordinate UDP-N-acetyl-alpha-D-glucosamine.

It belongs to the EPSP synthase family. MurA subfamily.

The protein resides in the cytoplasm. It catalyses the reaction phosphoenolpyruvate + UDP-N-acetyl-alpha-D-glucosamine = UDP-N-acetyl-3-O-(1-carboxyvinyl)-alpha-D-glucosamine + phosphate. It functions in the pathway cell wall biogenesis; peptidoglycan biosynthesis. Cell wall formation. Adds enolpyruvyl to UDP-N-acetylglucosamine. This is UDP-N-acetylglucosamine 1-carboxyvinyltransferase from Corynebacterium efficiens (strain DSM 44549 / YS-314 / AJ 12310 / JCM 11189 / NBRC 100395).